We begin with the raw amino-acid sequence, 154 residues long: Prefoldin subunit 2 (154 aa).

Disordered regions lie at residues 1 to 20 (MADSSGRVGKSGGSGAGKGA) and 126 to 154 (LMGEDEKPAAKENSEGAGAKASSAGVLVS). The segment covering 9-18 (GKSGGSGAGK) has biased composition (gly residues). Basic and acidic residues predominate over residues 126-139 (LMGEDEKPAAKENS). Positions 140 to 154 (EGAGAKASSAGVLVS) are enriched in low complexity.

This sequence belongs to the prefoldin subunit beta family. Heterohexamer of two PFD-alpha type and four PFD-beta type subunits. Component of the PAQosome complex which is responsible for the biogenesis of several protein complexes and which consists of R2TP complex members RUVBL1, RUVBL2, RPAP3 and PIH1D1, URI complex members PFDN2, PFDN6, PDRG1, UXT and URI1 as well as ASDURF, POLR2E and DNAAF10/WDR92. Interacts with URI1; the interaction is phosphorylation-dependent and occurs in a growth-dependent manner.

The protein resides in the nucleus. Its subcellular location is the cytoplasm. The protein localises to the mitochondrion. Binds specifically to cytosolic chaperonin (c-CPN) and transfers target proteins to it. Binds to nascent polypeptide chain and promotes folding in an environment in which there are many competing pathways for nonnative proteins. This Mus musculus (Mouse) protein is Prefoldin subunit 2 (Pfdn2).